The sequence spans 305 residues: Ornithine carbamoyltransferase (305 aa).

Residues Ser-54–Thr-57, Gln-81, Arg-105, and His-132–Gln-135 contribute to the carbamoyl phosphate site. L-ornithine-binding positions include Asn-163, Asp-223, and Ser-227 to Met-228. Carbamoyl phosphate-binding positions include Cys-262–Leu-263 and Arg-290.

Belongs to the aspartate/ornithine carbamoyltransferase superfamily. OTCase family.

It is found in the cytoplasm. The catalysed reaction is carbamoyl phosphate + L-ornithine = L-citrulline + phosphate + H(+). It functions in the pathway amino-acid biosynthesis; L-arginine biosynthesis; L-arginine from L-ornithine and carbamoyl phosphate: step 1/3. Functionally, reversibly catalyzes the transfer of the carbamoyl group from carbamoyl phosphate (CP) to the N(epsilon) atom of ornithine (ORN) to produce L-citrulline. The protein is Ornithine carbamoyltransferase of Agrobacterium fabrum (strain C58 / ATCC 33970) (Agrobacterium tumefaciens (strain C58)).